A 225-amino-acid polypeptide reads, in one-letter code: Insulin-induced gene 2 protein (225 aa).

The Cytoplasmic portion of the chain corresponds to 1 to 28 (MAEGETESPRPKKCGPYISSVTSQSVNV). A helical transmembrane segment spans residues 29–51 (VIRGVVLFFIGVFLALVLNLLQI). Residues 52–70 (QRNVTLFPPDVITSIFSSA) lie on the Lumenal side of the membrane. Residues 71–88 (WWVPPCCGTASAVIGLLY) form a helical membrane-spanning segment. Topologically, residues 89–103 (PCIDRHLGEPHKFKR) are cytoplasmic. The helical transmembrane segment at 104-126 (EWSSVMRCVAVFVGINHASAKVD) threads the bilayer. The Lumenal portion of the chain corresponds to 127 to 129 (FDN). Residues 130-148 (NFQFSLTLAALSVGLWWTF) traverse the membrane as a helical segment. Residues 149–153 (DRSRS) lie on the Cytoplasmic side of the membrane. Phosphoserine is present on S151. Residues 154–175 (GFGLGVGIAFLATVVTQLLVYN) traverse the membrane as a helical segment. Residues 176 to 189 (GVYQYTSPDFLYVR) are Lumenal-facing. Residues 190–207 (SWLPCIFFAGGITMGNIG) traverse the membrane as a helical segment. At 208–225 (RQLAMYECKVIAEKSHQE) the chain is on the cytoplasmic side. C215 carries the cysteine sulfenic acid (-SOH); alternate modification. Residue C215 forms a Glycyl cysteine thioester (Cys-Gly) (interchain with G-Cter in ubiquitin); alternate linkage. The short motif at 219–225 (AEKSHQE) is the KxHxx element.

It belongs to the INSIG family. In terms of assembly, interacts with SCAP; interaction is direct and only takes place in the presence of sterols; it prevents interaction between SCAP and the coat protein complex II (COPII). Associates with the SCAP-SREBP complex (composed of SCAP and SREBF1/SREBP1 or SREBF2/SREBP2); association is mediated via its interaction with SCAP and only takes place in the presence of sterols. Interacts with RNF139. Interacts with RNF145. Post-translationally, phosphorylation at Ser-151 by PCK1 reduces binding to oxysterol, disrupting the interaction between INSIG2 and SCAP, thereby promoting nuclear translocation of SREBP proteins (SREBF1/SREBP1 or SREBF2/SREBP2) and subsequent transcription of downstream lipogenesis-related genes. Polyubiquitinated by AMFR/gp78 at Cys-215 in some tissues such as adipose tissues, undifferentiated myoblasts and liver, leading to its degradation. In differentiated myotubes, Cys-215 oxidation prevents ubiquitination at the same site, resulting in protein stabilization. In terms of processing, oxidized at Cys-215 in differentiated myotubes, preventing ubiquitination at the same site, and resulting in protein stabilization. As to expression, expressed in liver, testis, kidney, spleen, intestine, brain and adrenal gland.

The protein resides in the endoplasmic reticulum membrane. Functionally, oxysterol-binding protein that mediates feedback control of cholesterol synthesis by controlling both endoplasmic reticulum to Golgi transport of SCAP and degradation of HMGCR. Acts as a negative regulator of cholesterol biosynthesis by mediating the retention of the SCAP-SREBP complex in the endoplasmic reticulum, thereby blocking the processing of sterol regulatory element-binding proteins (SREBPs) SREBF1/SREBP1 and SREBF2/SREBP2. Binds oxysterol, including 22-hydroxycholesterol, 24-hydroxycholesterol, 25-hydroxycholesterol and 27-hydroxycholesterol, regulating interaction with SCAP and retention of the SCAP-SREBP complex in the endoplasmic reticulum. In presence of oxysterol, interacts with SCAP, retaining the SCAP-SREBP complex in the endoplasmic reticulum, thereby preventing SCAP from escorting SREBF1/SREBP1 and SREBF2/SREBP2 to the Golgi. Sterol deprivation or phosphorylation by PCK1 reduce oxysterol-binding, disrupting the interaction between INSIG2 and SCAP, thereby promoting Golgi transport of the SCAP-SREBP complex, followed by processing and nuclear translocation of SREBF1/SREBP1 and SREBF2/SREBP2. Also regulates cholesterol synthesis by regulating degradation of HMGCR: initiates the sterol-mediated ubiquitin-mediated endoplasmic reticulum-associated degradation (ERAD) of HMGCR via recruitment of the reductase to the ubiquitin ligase RNF139. The chain is Insulin-induced gene 2 protein from Mus musculus (Mouse).